Here is an 853-residue protein sequence, read N- to C-terminus: DNA mismatch repair protein MutS (853 aa).

Residue 614–621 (GPNMGGKS) participates in ATP binding.

The protein belongs to the DNA mismatch repair MutS family.

Its function is as follows. This protein is involved in the repair of mismatches in DNA. It is possible that it carries out the mismatch recognition step. This protein has a weak ATPase activity. In Shigella boydii serotype 18 (strain CDC 3083-94 / BS512), this protein is DNA mismatch repair protein MutS.